The sequence spans 827 residues: Carnosine synthase 1 (827 aa).

An ATP-grasp domain is found at 516-720 (GPPWPAPSLH…LLLAAVMVAC (205 aa)). 542-611 (VHQVPLPGVM…MEFVEGTEHD (70 aa)) is a binding site for ATP. 3 residues coordinate Mg(2+): Glu-677, Glu-689, and Asn-691. Positions 677, 689, and 691 each coordinate Mn(2+).

Homotetramer. The cofactor is Mg(2+). Mn(2+) serves as cofactor.

It carries out the reaction beta-alanine + L-histidine + ATP = carnosine + ADP + phosphate + H(+). The enzyme catalyses 4-aminobutanoate + L-histidine + ATP = L-homocarnosine + ADP + phosphate + H(+). Catalyzes the synthesis of carnosine and homocarnosine. Carnosine is synthesized more efficiently than homocarnosine. In Homo sapiens (Human), this protein is Carnosine synthase 1.